The primary structure comprises 283 residues: MSTYLIGDVHGCYDELVALLQQVEFTPGQDTLWLTGDLVARGPGSLEVLRYVRSLGDSVRMVLGNHDLHLLAVFAGISRNKPKDRVTPLLEAPDADELINWLRRQPLLQVDEDKKLVMAHAGITPQWDLPTAQACARDVEAVLASDSYPLFLDAMYGDMPNNWSPELTGLARLRFISNAFTRMRYCFPNGQLDMYCKESPESAPAPLKPWFAIPGPVAQEYAIVFGHWASLEGKGTPENIYALDTGCCWGGTLTCLRWEDKAVFTQHSNRQADSDDDKAAIAS.

Belongs to the Ap4A hydrolase family.

The enzyme catalyses P(1),P(4)-bis(5'-adenosyl) tetraphosphate + H2O = 2 ADP + 2 H(+). Its function is as follows. Hydrolyzes diadenosine 5',5'''-P1,P4-tetraphosphate to yield ADP. The polypeptide is Bis(5'-nucleosyl)-tetraphosphatase, symmetrical (Cronobacter sakazakii (strain ATCC BAA-894) (Enterobacter sakazakii)).